We begin with the raw amino-acid sequence, 1317 residues long: Kinesin-like protein KIF16B (1317 aa).

The Kinesin motor domain occupies 3 to 358 (SVKVAVRVRP…LRYANRAKNI (356 aa)). An ATP-binding site is contributed by 102–109 (GQTGSGKS). A coiled-coil region spans residues 370-425 (VKLIRELRAEIARLKTLLAQGNQIALLDSPTALSMEEKLQQNEARVQELTKEWTNK). S398 carries the phosphoserine modification. The region spanning 478–529 (TYVGRDDASTEQDIVLHGLDLESEHCIFENIGGTVTLIPLSGSQCSVNGVQI) is the FHA domain. T577 carries the post-translational modification Phosphothreonine. S582 carries the post-translational modification Phosphoserine. Coiled-coil stretches lie at residues 595–882 (GLEF…DESV) and 936–1087 (LSLD…VQKD). Residues 1036–1048 (LASLNSGSREQSG) are compositionally biased toward polar residues. The segment at 1036–1057 (LASLNSGSREQSGLQASLEAEQ) is disordered. At S1052 the chain carries Phosphoserine. Residues 1182 to 1296 (DPIKISIPRY…KVGLTLSKHT (115 aa)) enclose the PX domain.

It belongs to the TRAFAC class myosin-kinesin ATPase superfamily. Kinesin family. As to quaternary structure, interacts with RAB14. Interacts with PTPN21. In terms of tissue distribution, primarily expressed in brain. Also present in kidney, liver, intestine, placenta, leukocytes, heart and skeletal muscle (at protein level).

It localises to the cytoplasm. It is found in the cytoskeleton. The protein resides in the early endosome membrane. Its subcellular location is the spindle. Its function is as follows. Plus end-directed microtubule-dependent motor protein involved in endosome transport and receptor recycling and degradation. Regulates the plus end motility of early endosomes and the balance between recycling and degradation of receptors such as EGF receptor (EGFR) and FGF receptor (FGFR). Regulates the Golgi to endosome transport of FGFR-containing vesicles during early development, a key process for developing basement membrane and epiblast and primitive endoderm lineages during early postimplantation development. The sequence is that of Kinesin-like protein KIF16B (KIF16B) from Homo sapiens (Human).